We begin with the raw amino-acid sequence, 1394 residues long: Ninein-like protein (1394 aa).

EF-hand domains follow at residues 8–43 (HYVS…LGLE) and 42–77 (LEEQ…VLSS). 2 disordered regions span residues 77–99 (SGSG…SCAV) and 126–166 (KYGS…KEPQ). S149 is subject to Phosphoserine. The span at 151 to 166 (ESLKSDEDAESAKEPQ) shows a compositional bias: basic and acidic residues. EF-hand domains lie at 197 to 232 (TPEN…IGLH) and 234 to 269 (LEKQ…HEPP). 5 residues coordinate Ca(2+): D247, D249, D251, R253, and E258. Coiled coils occupy residues 382–423 (RQEL…MDDC), 461–515 (WEQA…DSEK), and 544–584 (EQFT…SRQS). Residues 494-496 (KEN) carry the KEN box motif. The segment at 578-602 (LPRSRQSPAGTPGTHRRRIPGRGPA) is disordered. The D-box motif lies at 632 to 640 (RMQLETKVN). Residues 835–863 (EKEKLEQTYREQVEGLVQEADVLRALLKN) are a coiled coil. Polar residues predominate over residues 866-893 (TVVSDQQERTPSSMSLGPDSRQQPTARQ). Residues 866–977 (TVVSDQQERT…SARTLTGQGQ (112 aa)) are disordered. The segment covering 939 to 951 (RSSENLGVRDNHQ) has biased composition (basic and acidic residues). 2 coiled-coil regions span residues 1057 to 1229 (SESE…ELTE) and 1269 to 1331 (GARV…LRKQ).

In terms of assembly, interacts with gamma-tubulin and TUBGCP4. Interacts with anaphase promoting complex/cyclosome (APC/C). Interacts with CDC20 and FZR1. Interacts with LCA5 and USH2A. In terms of processing, phosphorylated by PLK1 which disrupts its centrosome association and interaction with gamma-tubulin. Ubiquitinated by the APC/C complex leading to its degradation.

The protein localises to the cytoplasm. It localises to the cytoskeleton. Its subcellular location is the microtubule organizing center. The protein resides in the centrosome. Its function is as follows. Involved in the microtubule organization in interphase cells. Overexpression induces the fragmentation of the Golgi, and causes lysosomes to disperse toward the cell periphery; it also interferes with mitotic spindle assembly. Involved in vesicle transport in photoreceptor cells. This is Ninein-like protein (Ninl) from Mus musculus (Mouse).